We begin with the raw amino-acid sequence, 277 residues long: 2-dehydro-3-deoxyphosphooctonate aldolase (277 aa).

It belongs to the KdsA family.

The protein resides in the cytoplasm. The catalysed reaction is D-arabinose 5-phosphate + phosphoenolpyruvate + H2O = 3-deoxy-alpha-D-manno-2-octulosonate-8-phosphate + phosphate. It functions in the pathway carbohydrate biosynthesis; 3-deoxy-D-manno-octulosonate biosynthesis; 3-deoxy-D-manno-octulosonate from D-ribulose 5-phosphate: step 2/3. The protein operates within bacterial outer membrane biogenesis; lipopolysaccharide biosynthesis. The sequence is that of 2-dehydro-3-deoxyphosphooctonate aldolase from Hydrogenovibrio crunogenus (strain DSM 25203 / XCL-2) (Thiomicrospira crunogena).